Here is a 475-residue protein sequence, read N- to C-terminus: Ankyrin repeat, SAM and basic leucine zipper domain-containing protein 1 (475 aa).

Positions 1-25 (MAAGALRGLPVAGGGESSESEDDGW) are disordered. Residues serine 17, serine 18, and serine 20 each carry the phosphoserine modification. 6 ANK repeats span residues 45–74 (EKKE…SVDS), 78–107 (YGWT…NASF), 110–144 (DKQT…DPNV), 148–177 (RLMT…EVNT), 181–210 (NGYT…NKML), and 214–243 (DGKM…PLEG). In terms of domain architecture, SAM spans 272 to 334 (SYTAFGDLEV…KILAALKELQ (63 aa)).

As to quaternary structure, interacts with DDX4, PIWIL1, RANBP9 and TDRD1.

It localises to the cytoplasm. Its function is as follows. Plays a central role during spermatogenesis by repressing transposable elements and preventing their mobilization, which is essential for the germline integrity. Acts via the piRNA metabolic process, which mediates the repression of transposable elements during meiosis by forming complexes composed of piRNAs and Piwi proteins and governs the methylation and subsequent repression of transposons. Its association with pi-bodies suggests a participation in the primary piRNAs metabolic process. Required prior to the pachytene stage to facilitate the production of multiple types of piRNAs, including those associated with repeats involved in the regulation of retrotransposons. May act by mediating protein-protein interactions during germ cell maturation. This is Ankyrin repeat, SAM and basic leucine zipper domain-containing protein 1 (ASZ1) from Chlorocebus aethiops (Green monkey).